The chain runs to 248 residues: Glutathione S-transferase omega-2 (248 aa).

The 80-residue stretch at Gly22 to Lys101 folds into the GST N-terminal domain. The Nucleophile role is filled by Cys32. Residues Lys59, Val72, and Glu85–Ser86 contribute to the glutathione site. One can recognise a GST C-terminal domain in the interval Asp106–Phe231.

The protein belongs to the GST superfamily. Omega family.

The catalysed reaction is RX + glutathione = an S-substituted glutathione + a halide anion + H(+). It carries out the reaction L-dehydroascorbate + 2 glutathione = glutathione disulfide + L-ascorbate. The enzyme catalyses methylarsonate + 2 glutathione + H(+) = methylarsonous acid + glutathione disulfide + H2O. Functionally, exhibits glutathione-dependent thiol transferase activity. Has high dehydroascorbate reductase activity and may contribute to the recycling of ascorbic acid. Participates in the biotransformation of inorganic arsenic and reduces monomethylarsonic acid (MMA). In Rattus norvegicus (Rat), this protein is Glutathione S-transferase omega-2 (Gsto2).